The following is a 191-amino-acid chain: Calcium-activated potassium channel subunit beta-1 (191 aa).

Over 2–18 (GKKLVMAQRRGETRALC) the chain is Cytoplasmic. A helical membrane pass occupies residues 19 to 39 (LGVAMVVGAVITYYILGTTVL). Residues 40 to 157 (PLYQKSVWTQ…YRRLYGPQSL (118 aa)) lie on the Extracellular side of the membrane. N-linked (GlcNAc...) asparagine glycans are attached at residues asparagine 80 and asparagine 142. A helical membrane pass occupies residues 158 to 178 (LFSLFWPTFLLTGGLLIIVMV). Over 179–191 (KINQSLSILAAQR) the chain is Cytoplasmic.

It belongs to the KCNMB (TC 8.A.14.1) family. KCNMB1 subfamily. In terms of assembly, interacts with KCNMA1 tetramer. There are probably 4 molecules of KCMNB1 per KCNMA1 tetramer. N-glycosylated.

Its subcellular location is the membrane. In terms of biological role, regulatory subunit of the calcium activated potassium KCNMA1 (maxiK) channel. Modulates the calcium sensitivity and gating kinetics of KCNMA1, thereby contributing to KCNMA1 channel diversity. Increases the apparent Ca(2+)/voltage sensitivity of the KCNMA1 channel. It also modifies KCNMA1 channel kinetics and alters its pharmacological properties. It slows down the activation and the deactivation kinetics of the channel. Acts as a negative regulator of smooth muscle contraction by enhancing the calcium sensitivity to KCNMA1. Its presence is also a requirement for internal binding of the KCNMA1 channel opener dehydrosoyasaponin I (DHS-1) triterpene glycoside and for external binding of the agonist hormone 17-beta-estradiol (E2). Increases the binding activity of charybdotoxin (CTX) toxin to KCNMA1 peptide blocker by increasing the CTX association rate and decreasing the dissociation rate. The chain is Calcium-activated potassium channel subunit beta-1 (KCNMB1) from Bos taurus (Bovine).